Here is a 190-residue protein sequence, read N- to C-terminus: Vacuolar protein sorting-associated protein 29 (190 aa).

It belongs to the VPS29 family. Component of the retromer complex which consists of VPS29 (MAG1), VPS26 (VPS26A or VPS26B), VPS35 (VPS35A or VPS35B or VPS35C), VPS5/17 (SNX1 or SNX2A or SNX2B). Component of a retromer subcomplex consisting of VPS29 (MAG1), VPS26 (VPS26A or VPS26B), VPS35 (VPS35A or VPS35B or VPS35C).

The protein localises to the cytoplasm. The protein resides in the endosome membrane. It localises to the prevacuolar compartment membrane. Its subcellular location is the golgi apparatus. It is found in the trans-Golgi network membrane. The protein localises to the late endosome membrane. In terms of biological role, plays a role in vesicular protein sorting. Component of the membrane-associated retromer complex which is essential in endosome-to-Golgi retrograde transport. Required for the auxin-carrier protein PIN2 sorting to the lytic vacuolar pathway and the PIN1 recycling to the plasma membrane, thus influencing auxin transport orientation. Also involved in the efficient sorting of seed storage proteins globulin 12S and albumin 2S. The VPS29-VPS26-VPS35 subcomplex may be involved in recycling of specific cargos from endosome to the plasma membrane. The chain is Vacuolar protein sorting-associated protein 29 from Arabidopsis thaliana (Mouse-ear cress).